A 294-amino-acid chain; its full sequence is Deubiquitinase OTUD6B (294 aa).

2 disordered regions span residues 1–46 and 67–120; these read MDEA…RKQL and AFAQ…ERDE. Polar residues-rich tracts occupy residues 27-36 and 73-86; these read KIQSMKNSVP and PEPT…NGVT. The segment covering 111 to 120 has biased composition (basic and acidic residues); it reads KAAQEKERDE. Residues 150–287 enclose the OTU domain; the sequence is LQIRQIPSDG…GEHYNSVELL (138 aa). A cys-loop region spans residues 155–161; the sequence is IPSDGHC. The active site involves Asp-158. Cys-161 acts as the Nucleophile in catalysis. Residues 222 to 232 are variable-loop; sequence IVNTPAWGGQL. Residues 270 to 280 are his-loop; sequence YMRHAYGLGEH. His-280 is an active-site residue.

The catalysed reaction is Thiol-dependent hydrolysis of ester, thioester, amide, peptide and isopeptide bonds formed by the C-terminal Gly of ubiquitin (a 76-residue protein attached to proteins as an intracellular targeting signal).. Deubiquitinating enzyme that may play a role in the ubiquitin-dependent regulation of different cellular processes. The polypeptide is Deubiquitinase OTUD6B (otud6b) (Xenopus tropicalis (Western clawed frog)).